The sequence spans 246 residues: Chaperone protein SefB (246 aa).

Residues 1–24 (MYILNKFIRRTVIFFFFCYLPIAS) form the signal peptide. Cysteines 124 and 155 form a disulfide.

The protein belongs to the periplasmic pilus chaperone family.

Its subcellular location is the periplasm. Required for the biogenesis of the SefA (SEF14) fimbria. This is Chaperone protein SefB (sefB) from Salmonella enteritidis.